The sequence spans 333 residues: Protein FAM170A (333 aa).

Disordered regions lie at residues 1 to 45, 73 to 107, and 143 to 214; these read MKRR…GVGE, LQDSSKPRSPLDQVPEGEATTAPSQQASSSCPSYK, and ETSE…AKTP. Over residues 10 to 29 the composition is skewed to basic and acidic residues; sequence LEIEESKEAGISKSQEDISH. Positions 92–105 are enriched in low complexity; the sequence is TTAPSQQASSSCPS. The segment covering 143 to 156 has biased composition (basic and acidic residues); sequence ETSESLEKQPRMEE. Residues 170–179 show a composition bias toward polar residues; the sequence is SDVSTRNLLS. Residues 185–196 are compositionally biased toward basic and acidic residues; the sequence is GEEKEHEEKPES. Thr-213 carries the post-translational modification Phosphothreonine. A C2H2-type; degenerate zinc finger spans residues 224–248; it reads FRCMACCRVFATMESLQEHVQYGIR. A disordered region spans residues 267–333; sequence MESESTQEEE…RKDHCDNSGS (67 aa). The segment covering 271 to 281 has biased composition (acidic residues); that stretch reads STQEEEEDHTE. Over residues 282-293 the composition is skewed to basic and acidic residues; the sequence is ETEKPKEEKAEE. Position 308 is a phosphoserine (Ser-308).

Belongs to the FAM170 family. Testis-specific.

The protein resides in the nucleus. In terms of biological role, acts as a nuclear transcription factor that positively regulates the expression of heat shock genes. Binds to heat shock promoter elements (HSE). The protein is Protein FAM170A (Fam170a) of Mus musculus (Mouse).